Reading from the N-terminus, the 279-residue chain is Large ribosomal subunit protein uL2 (279 aa).

Positions 222-279 are disordered; sequence GVAMNPVDHPHGGGEGRTSGGRHPVTPAGKPTKGAKTRVNKATDKFIIRSRHKAKKGR. Over residues 269–279 the composition is skewed to basic residues; the sequence is IRSRHKAKKGR.

Belongs to the universal ribosomal protein uL2 family. Part of the 50S ribosomal subunit. Forms a bridge to the 30S subunit in the 70S ribosome.

Its function is as follows. One of the primary rRNA binding proteins. Required for association of the 30S and 50S subunits to form the 70S ribosome, for tRNA binding and peptide bond formation. It has been suggested to have peptidyltransferase activity; this is somewhat controversial. Makes several contacts with the 16S rRNA in the 70S ribosome. The sequence is that of Large ribosomal subunit protein uL2 from Caulobacter vibrioides (strain ATCC 19089 / CIP 103742 / CB 15) (Caulobacter crescentus).